Consider the following 168-residue polypeptide: Crossover junction endodeoxyribonuclease RuvC (168 aa).

Catalysis depends on residues D7, E66, and D138. 3 residues coordinate Mg(2+): D7, E66, and D138.

Belongs to the RuvC family. Homodimer which binds Holliday junction (HJ) DNA. The HJ becomes 2-fold symmetrical on binding to RuvC with unstacked arms; it has a different conformation from HJ DNA in complex with RuvA. In the full resolvosome a probable DNA-RuvA(4)-RuvB(12)-RuvC(2) complex forms which resolves the HJ. The cofactor is Mg(2+).

The protein resides in the cytoplasm. It carries out the reaction Endonucleolytic cleavage at a junction such as a reciprocal single-stranded crossover between two homologous DNA duplexes (Holliday junction).. Functionally, the RuvA-RuvB-RuvC complex processes Holliday junction (HJ) DNA during genetic recombination and DNA repair. Endonuclease that resolves HJ intermediates. Cleaves cruciform DNA by making single-stranded nicks across the HJ at symmetrical positions within the homologous arms, yielding a 5'-phosphate and a 3'-hydroxyl group; requires a central core of homology in the junction. The consensus cleavage sequence is 5'-(A/T)TT(C/G)-3'. Cleavage occurs on the 3'-side of the TT dinucleotide at the point of strand exchange. HJ branch migration catalyzed by RuvA-RuvB allows RuvC to scan DNA until it finds its consensus sequence, where it cleaves and resolves the cruciform DNA. This is Crossover junction endodeoxyribonuclease RuvC from Cereibacter sphaeroides (strain ATCC 17029 / ATH 2.4.9) (Rhodobacter sphaeroides).